The sequence spans 98 residues: Large ribosomal subunit protein uL23 (98 aa).

Belongs to the universal ribosomal protein uL23 family. As to quaternary structure, part of the 50S ribosomal subunit. Contacts protein L29, and trigger factor when it is bound to the ribosome.

One of the early assembly proteins it binds 23S rRNA. One of the proteins that surrounds the polypeptide exit tunnel on the outside of the ribosome. Forms the main docking site for trigger factor binding to the ribosome. The protein is Large ribosomal subunit protein uL23 of Clostridium botulinum (strain Eklund 17B / Type B).